The following is a 588-amino-acid chain: ATP-dependent lipid A-core flippase (588 aa).

A run of 6 helical transmembrane segments spans residues 23–43, 56–76, 141–161, 162–182, 257–277, and 278–298; these read FWPV…IDAG, FITI…IGIT, DALT…TVMM, VICW…GIIV, LVIA…STVI, and TISA…IKPM. The ABC transmembrane type-1 domain occupies 28 to 310; the sequence is LLGVLANILY…LTTLNATIQR (283 aa). The 235-residue stretch at 342-576 folds into the ABC transporter domain; sequence IEFKHVYHAY…DGHYAQLYKV (235 aa). 375 to 382 provides a ligand contact to ATP; sequence GHSGSGKT.

The protein belongs to the ABC transporter superfamily. Lipid exporter (TC 3.A.1.106) family. In terms of assembly, homodimer.

The protein resides in the cell inner membrane. The enzyme catalyses ATP + H2O + lipid A-core oligosaccharideSide 1 = ADP + phosphate + lipid A-core oligosaccharideSide 2.. Functionally, involved in lipopolysaccharide (LPS) biosynthesis. Translocates lipid A-core from the inner to the outer leaflet of the inner membrane. Transmembrane domains (TMD) form a pore in the inner membrane and the ATP-binding domain (NBD) is responsible for energy generation. The chain is ATP-dependent lipid A-core flippase from Legionella pneumophila subsp. pneumophila (strain Philadelphia 1 / ATCC 33152 / DSM 7513).